Here is a 330-residue protein sequence, read N- to C-terminus: MATIKDIAQEAGFSISTVSRVLNNDESLSVPDETREKIYEAAEKLNYRKKTVRPLVKHIAFLYWLTDKEELEDVYFKTMRLEVEKLAKAFNVDMTTYKIADGIESIPEHTEGFIAVGTFSDEELAFLRNLTENGVFIDSTPDPDHFDSVRPDLAQMTRKTVNILTEKGHKSIGFIGGTYKNPNTNQDEMDIREQTFRSYMREKAMLDERYIFCHRGFSVENGYRLMSAAIDTLGDQLPTAFMIAADPIAVGCLQALNEKGIAIPNRVSIVSINNISFAKYVSPPLTTFHIDIHELCKNAVQLLLEQVQDKRRTVKTLYVGAELIVRKSMN.

Residues 2-57 (ATIKDIAQEAGFSISTVSRVLNNDESLSVPDETREKIYEAAEKLNYRKKTVRPLVK) enclose the HTH lacI-type domain. A DNA-binding region (H-T-H motif) is located at residues 4–23 (IKDIAQEAGFSISTVSRVLN).

In terms of biological role, negatively regulates the expression of the ganSPQAB operon. Inhibits transcription of the operon by binding to an operator in the promoter region. In the presence of galactobiose, GanR dissociates from the promoter, resulting in the expression of the gan operon. The sequence is that of HTH-type transcriptional regulator GanR from Bacillus subtilis (strain 168).